A 545-amino-acid chain; its full sequence is Indole-3-pyruvate decarboxylase (545 aa).

E48 lines the thiamine diphosphate pocket. Residues 382–460 are thiamine pyrophosphate binding; it reads DCLFTAMDMI…VILFNNASWE (79 aa). 2 residues coordinate Mg(2+): D429 and N456.

Belongs to the TPP enzyme family. A metal cation serves as cofactor. Thiamine diphosphate is required as a cofactor.

It catalyses the reaction indole-3-pyruvate + H(+) = indole-3-acetaldehyde + CO2. The protein operates within plant hormone metabolism; auxin biosynthesis. This is Indole-3-pyruvate decarboxylase (ipdC) from Azospirillum brasilense.